A 332-amino-acid chain; its full sequence is ADP-L-glycero-D-manno-heptose-6-epimerase (332 aa).

NADP(+) is bound by residues F13–I14, D34–N35, K41, K56, E78–S82, and N95. Catalysis depends on Y142, which acts as the Proton acceptor. K146 lines the NADP(+) pocket. A substrate-binding site is contributed by N171. NADP(+)-binding residues include V172 and K180. The Proton acceptor role is filled by K180. Substrate-binding positions include R182, H189, F203 to C206, R216, and Y295.

The protein belongs to the NAD(P)-dependent epimerase/dehydratase family. HldD subfamily. In terms of assembly, homopentamer. It depends on NADP(+) as a cofactor.

It catalyses the reaction ADP-D-glycero-beta-D-manno-heptose = ADP-L-glycero-beta-D-manno-heptose. It functions in the pathway nucleotide-sugar biosynthesis; ADP-L-glycero-beta-D-manno-heptose biosynthesis; ADP-L-glycero-beta-D-manno-heptose from D-glycero-beta-D-manno-heptose 7-phosphate: step 4/4. Its function is as follows. Catalyzes the interconversion between ADP-D-glycero-beta-D-manno-heptose and ADP-L-glycero-beta-D-manno-heptose via an epimerization at carbon 6 of the heptose. The chain is ADP-L-glycero-D-manno-heptose-6-epimerase from Thiobacillus denitrificans (strain ATCC 25259 / T1).